We begin with the raw amino-acid sequence, 156 residues long: MTMKNVQAFTDGSCLGNPGPGGWAAVLRCNGSERELSGGFALTTNNRMEILAVIEALALLKEPCGVDLYTDSQYVRNAVEKKWLAGWRRNGWKTSDKKPVKNRDLWERLQPLLDLHQVRFHWVRGHSGHPENERCDVLARTQASSRGLPPDTGYRE.

The region spanning 2–144 (TMKNVQAFTD…CDVLARTQAS (143 aa)) is the RNase H type-1 domain. D11, E49, D71, and D136 together coordinate Mg(2+).

The protein belongs to the RNase H family. In terms of assembly, monomer. It depends on Mg(2+) as a cofactor.

The protein resides in the cytoplasm. The catalysed reaction is Endonucleolytic cleavage to 5'-phosphomonoester.. Endonuclease that specifically degrades the RNA of RNA-DNA hybrids. The sequence is that of Ribonuclease H from Nitratidesulfovibrio vulgaris (strain DSM 19637 / Miyazaki F) (Desulfovibrio vulgaris).